A 642-amino-acid chain; its full sequence is Putative ankyrin repeat protein L91 (642 aa).

ANK repeat units lie at residues 42 to 76, 85 to 118, 153 to 186, 190 to 224, 227 to 256, 260 to 288, 292 to 322, 326 to 360, 365 to 397, 401 to 434, 438 to 470, 475 to 514, 518 to 550, and 554 to 587; these read HFTK…VKNP, EGWT…NPNI, NGFT…NVDS, NGET…TLHK, NGFT…DVNA, EGKS…EINH, NDIN…NPNE, NKNA…NPNI, SRTI…NVNA, EGRT…NVNH, DGAH…DVNI, KKWT…NVNA, YGNN…NVNH, and NGDT…NPNI.

The protein is Putative ankyrin repeat protein L91 of Acanthamoeba polyphaga (Amoeba).